The primary structure comprises 165 residues: Protein SprT (165 aa).

The 142-residue stretch at 22–163 (LAQANLKLGC…RCVHCGEQLV (142 aa)) folds into the SprT-like domain. His78 is a binding site for Zn(2+). Glu79 is a catalytic residue. Residue His82 coordinates Zn(2+).

The protein belongs to the SprT family. The cofactor is Zn(2+).

The protein localises to the cytoplasm. The sequence is that of Protein SprT from Shigella dysenteriae serotype 1 (strain Sd197).